A 123-amino-acid chain; its full sequence is UPF0738 protein Bcer98_0913 (123 aa).

Belongs to the UPF0738 family.

The sequence is that of UPF0738 protein Bcer98_0913 from Bacillus cytotoxicus (strain DSM 22905 / CIP 110041 / 391-98 / NVH 391-98).